Reading from the N-terminus, the 129-residue chain is Small ribosomal subunit protein bS6 (129 aa).

The protein belongs to the bacterial ribosomal protein bS6 family.

Binds together with bS18 to 16S ribosomal RNA. This chain is Small ribosomal subunit protein bS6, found in Microcystis aeruginosa (strain NIES-843 / IAM M-2473).